A 1065-amino-acid polypeptide reads, in one-letter code: Pumilio domain-containing protein P35G2.14 (1065 aa).

3 disordered regions span residues 1–78 (MHQD…SLRS), 130–265 (ITSK…PWSP), and 422–573 (TTGF…NTNS). The segment covering 16-44 (RNTISKPSNNNPPLDMSSLNNDFGQQLDS) has biased composition (polar residues). Over residues 59–77 (NPSSNFNDSNRSNISSSLR) the composition is skewed to low complexity. 2 stretches are compositionally biased toward polar residues: residues 134–151 (LQNN…RGRT) and 169–189 (SSVS…HFNP). Composition is skewed to low complexity over residues 190-224 (SSSS…SEII) and 236-246 (SASNAANSGSN). Polar residues-rich tracts occupy residues 247-262 (TIRA…NTLP) and 434-455 (GLNT…TFEV). Position 260 is a phosphothreonine (threonine 260). The span at 470–483 (PLGSLSSRPKPSSS) shows a compositional bias: low complexity. Polar residues-rich tracts occupy residues 495–522 (LKTS…SSSP) and 529–551 (IHNQ…NGLR). A phosphoserine mark is found at serine 506, serine 511, and serine 515. Position 554 is a phosphothreonine (threonine 554). Residues 559-573 (NISTRSSSESNNTNS) show a composition bias toward low complexity. Residues 592–666 (HALWVGNLPS…DPVCISFAKV (75 aa)) enclose the RRM domain. The PUM-HD domain occupies 712–1065 (DLSKIYQILN…ELKKLAEVCA (354 aa)). 6 Pumilio repeats span residues 771–808 (AINW…MMLE), 809–844 (RIAP…RLIA), 846–884 (HLQP…AILN), 886–917 (FWVI…VLVA), 919–954 (AITV…ILLT), and 956–993 (RFVQ…LVVD).

The protein localises to the cytoplasm. This is Pumilio domain-containing protein P35G2.14 from Schizosaccharomyces pombe (strain 972 / ATCC 24843) (Fission yeast).